Consider the following 332-residue polypeptide: Malate dehydrogenase, cytoplasmic (332 aa).

Residues 16–17 (QI), D43, and G90 each bind NAD(+). R99 is a binding site for oxaloacetate. Q113 and N132 together coordinate NAD(+). 4 residues coordinate oxaloacetate: N132, R163, H188, and S243. H188 serves as the catalytic Proton acceptor.

This sequence belongs to the LDH/MDH superfamily. MDH type 2 family. In terms of assembly, homodimer.

It is found in the cytoplasm. The catalysed reaction is (S)-malate + NAD(+) = oxaloacetate + NADH + H(+). In Beta vulgaris (Sugar beet), this protein is Malate dehydrogenase, cytoplasmic (NR1).